A 202-amino-acid chain; its full sequence is Small ribosomal subunit protein uS4 (202 aa).

Residues 15-42 (LGDLPGLTRKAAKRSYPPGQHGQARRKR) are disordered. The S4 RNA-binding domain maps to 90-152 (NRLDNVCFRL…KCSKQLAEGN (63 aa)).

The protein belongs to the universal ribosomal protein uS4 family. Part of the 30S ribosomal subunit. Contacts protein S5. The interaction surface between S4 and S5 is involved in control of translational fidelity.

One of the primary rRNA binding proteins, it binds directly to 16S rRNA where it nucleates assembly of the body of the 30S subunit. Functionally, with S5 and S12 plays an important role in translational accuracy. The protein is Small ribosomal subunit protein uS4 of Parasynechococcus marenigrum (strain WH8102).